We begin with the raw amino-acid sequence, 556 residues long: Formate--tetrahydrofolate ligase (556 aa).

ATP is bound at residue Thr-65 to Thr-72.

It belongs to the formate--tetrahydrofolate ligase family.

The catalysed reaction is (6S)-5,6,7,8-tetrahydrofolate + formate + ATP = (6R)-10-formyltetrahydrofolate + ADP + phosphate. Its pathway is one-carbon metabolism; tetrahydrofolate interconversion. This Symbiobacterium thermophilum (strain DSM 24528 / JCM 14929 / IAM 14863 / T) protein is Formate--tetrahydrofolate ligase.